The primary structure comprises 229 residues: Heptaprenylglyceryl phosphate synthase (229 aa).

Residue lysine 12 participates in sn-glycerol 1-phosphate binding. Aspartate 14 and serine 40 together coordinate Mg(2+). Sn-glycerol 1-phosphate is bound by residues tyrosine 159–glycine 164, glycine 189, and glycine 209–asparagine 210.

The protein belongs to the GGGP/HepGP synthase family. Group I subfamily. As to quaternary structure, homodimer. Mg(2+) is required as a cofactor.

It catalyses the reaction sn-glycerol 1-phosphate + all-trans-heptaprenyl diphosphate = 3-heptaprenyl-sn-glycero-1-phosphate + diphosphate. It participates in membrane lipid metabolism; glycerophospholipid metabolism. In terms of biological role, prenyltransferase that catalyzes in vivo the transfer of the heptaprenyl moiety of heptaprenyl pyrophosphate (HepPP; 35 carbon atoms) to the C3 hydroxyl of sn-glycerol-1-phosphate (G1P), producing heptaprenylglyceryl phosphate (HepGP). This reaction is an ether-bond-formation step in the biosynthesis of archaea-type G1P-based membrane lipids found in Bacillales. The sequence is that of Heptaprenylglyceryl phosphate synthase from Bacillus cereus (strain B4264).